The sequence spans 93 residues: UPF0473 protein RBAM_024480 (93 aa).

This sequence belongs to the UPF0473 family.

The protein is UPF0473 protein RBAM_024480 of Bacillus velezensis (strain DSM 23117 / BGSC 10A6 / LMG 26770 / FZB42) (Bacillus amyloliquefaciens subsp. plantarum).